A 58-amino-acid chain; its full sequence is MLYWAIVCLVIAVIAGILGFGGIAGTAAGFAKILFFVFLVLLVVSLVVNALRGKGPKV.

2 consecutive transmembrane segments (helical) span residues 4–24 (WAIV…GGIA) and 28–48 (AGFA…SLVV).

Belongs to the UPF0391 family.

The protein localises to the cell membrane. The polypeptide is UPF0391 membrane protein Maqu_2901 (Marinobacter nauticus (strain ATCC 700491 / DSM 11845 / VT8) (Marinobacter aquaeolei)).